Consider the following 269-residue polypeptide: Lysyl endopeptidase (269 aa).

3 disulfide bridges follow: Cys6–Cys216, Cys12–Cys80, and Cys36–Cys58. Residues His57, Asp113, and Ser194 each act as charge relay system in the active site.

The protein belongs to the peptidase S1 family.

It localises to the secreted. It carries out the reaction Preferential cleavage: Lys-|-Xaa, including Lys-|-Pro.. Highly specific endopeptidase that hydrolyzes lysyl bonds including the Lys-Pro bond. This chain is Lysyl endopeptidase, found in Lysobacter enzymogenes.